A 784-amino-acid chain; its full sequence is Alpha-catulin (784 aa).

Positions 35–247 (IKTKSIEQTL…LLLTASKTYL (213 aa)) are vinculin/alpha-catenin homology 1 (VH1) region. The stretch at 387–414 (ASGLEVTVERLNRRLKDLSKQLQIVAME) forms a coiled coil. Residues 552-696 (PRPGKHGTTQ…MVKSPTVGKT (145 aa)) are vinculin/alpha-catenin homology 2 (VH2) region. The tract at residues 737–784 (GSVNGRTGADGERTSRESTVWRRTPSIRRAAPPTSSHLSANNSSSIHI) is disordered. Residues 745–756 (ADGERTSRESTV) show a composition bias toward basic and acidic residues. A compositionally biased stretch (low complexity) spans 771 to 784 (SSHLSANNSSSIHI).

This sequence belongs to the vinculin/alpha-catenin family. As to quaternary structure, interacts with slo-1 (via C-terminus); the interaction is required for localization of slo-1 to dense bodies in body wall muscle cells. Interacts (via N-terminus) with dystrophin complex member dyb-1 (via C-terminus); the interaction is required for localization of the dystrophin complex and ctn-1 near dense bodies in muscle cells. In terms of tissue distribution, expressed in body wall muscles, vulval muscles, stomatointestinal cells and pharyngeal muscle cells. Expressed in enteric muscles, nerve ring neurons and in the ventral nerve cord.

The protein resides in the cytoplasm. Required for slo-1 potassium ion channel clustering at presynaptic terminals and in egg-laying muscles; clustering of slo-1 mediates the intoxicating and sedatory effects of ethanol on worms. Required for slo-1 localization to dense bodies in body wall muscle cells. Maintains the localization of the dystrophin complex near muscle cell dense bodies via its interaction with complex member dyb-1 which is required for slo-1 localization in muscle while slo-1 localization in neurons is independent of the dystrophin complex. In Caenorhabditis elegans, this protein is Alpha-catulin.